The chain runs to 220 residues: MLRAAFRGSAYIGVFARATESCVLVRPDLDDDFVDSIADELGVPAVQTTVGGSSTVGSLAAGNSSGLLVSNRIRERERDRIEAAGVTVGELPGAVNAAGNVVVANDDGAYVHSGLSDDAVAAVEETLDVSATRGQLAGVDTVGTAAVATTDGVLCHPKATDAELERIEETLGVYADVGTVNYGAPLVGSGLVAADDGYLVGDDTTGPEIGRIEDTLGYIE.

This sequence belongs to the eIF-6 family.

Functionally, binds to the 50S ribosomal subunit and prevents its association with the 30S ribosomal subunit to form the 70S initiation complex. The protein is Translation initiation factor 6 of Halobacterium salinarum (strain ATCC 29341 / DSM 671 / R1).